A 381-amino-acid polypeptide reads, in one-letter code: Cytochrome b (381 aa).

A run of 4 helical transmembrane segments spans residues 34-54 (FGSL…FLAM), 78-99 (WLIR…YFHI), 114-134 (WNIG…GYVL), and 179-199 (FFAF…IHIL). Residues His84 and His98 each coordinate heme b. Residues His183 and His197 each coordinate heme b. His202 contacts a ubiquinone. Transmembrane regions (helical) follow at residues 227–247 (YKDA…ALFL), 289–309 (LGGV…PFLH), 321–341 (LTQV…WIGG), and 348–368 (FILI…IAIP).

This sequence belongs to the cytochrome b family. As to quaternary structure, the cytochrome bc1 complex contains 3 respiratory subunits (MT-CYB, CYC1 and UQCRFS1), 2 core proteins (UQCRC1 and UQCRC2) and probably 6 low-molecular weight proteins. It depends on heme b as a cofactor.

It is found in the mitochondrion inner membrane. Functionally, component of the ubiquinol-cytochrome c reductase complex (complex III or cytochrome b-c1 complex) that is part of the mitochondrial respiratory chain. The b-c1 complex mediates electron transfer from ubiquinol to cytochrome c. Contributes to the generation of a proton gradient across the mitochondrial membrane that is then used for ATP synthesis. The chain is Cytochrome b (mt-cyb) from Carcharodon carcharias (Great white shark).